The sequence spans 454 residues: Bifunctional protein GlmU (454 aa).

The interval 1–233 is pyrophosphorylase; the sequence is MTNRTCLAVI…RESAVGINNR (233 aa). Residues 11 to 14, Lys-25, Gln-79, and 84 to 85 contribute to the UDP-N-acetyl-alpha-D-glucosamine site; these read LAAG and GT. Position 109 (Asp-109) interacts with Mg(2+). UDP-N-acetyl-alpha-D-glucosamine is bound by residues Gly-145, Glu-159, Asn-174, and Asn-231. Asn-231 is a binding site for Mg(2+). The linker stretch occupies residues 234–254; that stretch reads AELAEAEAVWQQKRRRELMLS. Residues 255–454 form an N-acetyltransferase region; the sequence is GVTLIAPETV…AEEKAKKSGG (200 aa). 2 residues coordinate UDP-N-acetyl-alpha-D-glucosamine: Arg-320 and Lys-338. The active-site Proton acceptor is His-350. The UDP-N-acetyl-alpha-D-glucosamine site is built by Tyr-353 and Asn-364. Acetyl-CoA is bound by residues Ala-367, 373–374, Ser-410, and Arg-427; that span reads NY.

It in the N-terminal section; belongs to the N-acetylglucosamine-1-phosphate uridyltransferase family. This sequence in the C-terminal section; belongs to the transferase hexapeptide repeat family. Homotrimer. The cofactor is Mg(2+).

It localises to the cytoplasm. The enzyme catalyses alpha-D-glucosamine 1-phosphate + acetyl-CoA = N-acetyl-alpha-D-glucosamine 1-phosphate + CoA + H(+). The catalysed reaction is N-acetyl-alpha-D-glucosamine 1-phosphate + UTP + H(+) = UDP-N-acetyl-alpha-D-glucosamine + diphosphate. It participates in nucleotide-sugar biosynthesis; UDP-N-acetyl-alpha-D-glucosamine biosynthesis; N-acetyl-alpha-D-glucosamine 1-phosphate from alpha-D-glucosamine 6-phosphate (route II): step 2/2. The protein operates within nucleotide-sugar biosynthesis; UDP-N-acetyl-alpha-D-glucosamine biosynthesis; UDP-N-acetyl-alpha-D-glucosamine from N-acetyl-alpha-D-glucosamine 1-phosphate: step 1/1. It functions in the pathway bacterial outer membrane biogenesis; LPS lipid A biosynthesis. In terms of biological role, catalyzes the last two sequential reactions in the de novo biosynthetic pathway for UDP-N-acetylglucosamine (UDP-GlcNAc). The C-terminal domain catalyzes the transfer of acetyl group from acetyl coenzyme A to glucosamine-1-phosphate (GlcN-1-P) to produce N-acetylglucosamine-1-phosphate (GlcNAc-1-P), which is converted into UDP-GlcNAc by the transfer of uridine 5-monophosphate (from uridine 5-triphosphate), a reaction catalyzed by the N-terminal domain. The protein is Bifunctional protein GlmU of Chelativorans sp. (strain BNC1).